Reading from the N-terminus, the 407-residue chain is MTKIVEIVNETRLLRAQGVTAPAGFQAAGITAGIKVSGAPDLALVFNEGPDYAAAGVFTRNKVKAAPVLWTQRVLSTGQLRAVILNSGGANACTGPAGFQDAHTTAEAVAAALSDWGTETGAIEVAVCSTGLIGDRLPMDKVLAGVRAIVHKMAGGVTGGDDAAHAIMTTDTVPKQVALHNRNKWTVGGMAKGAGMLAPSLATMLCVLTTDAVVEPAALDQALRRATAHTFDRLDIDGCCSTNDTVLLLASGASGITPPQADLDDAVRHACDDLCAQLQADAEGVTKRVTVTVIGAASDDDALVAARMIARDNLVKTAVFGSDPNWGRVLAAVGMAPVALDPDRLCMSFNGAAVCIDGVGTPCARDVDLSTADIDITVDLRIGDSAATIRTTDLSHTYVEENSAYSS.

6 residues coordinate substrate: threonine 169, lysine 192, threonine 203, glutamate 283, asparagine 402, and serine 407. Threonine 203 (nucleophile) is an active-site residue.

It belongs to the ArgJ family. In terms of assembly, heterotetramer of two alpha and two beta chains.

Its subcellular location is the cytoplasm. The catalysed reaction is N(2)-acetyl-L-ornithine + L-glutamate = N-acetyl-L-glutamate + L-ornithine. It catalyses the reaction L-glutamate + acetyl-CoA = N-acetyl-L-glutamate + CoA + H(+). The protein operates within amino-acid biosynthesis; L-arginine biosynthesis; L-ornithine and N-acetyl-L-glutamate from L-glutamate and N(2)-acetyl-L-ornithine (cyclic): step 1/1. It participates in amino-acid biosynthesis; L-arginine biosynthesis; N(2)-acetyl-L-ornithine from L-glutamate: step 1/4. In terms of biological role, catalyzes two activities which are involved in the cyclic version of arginine biosynthesis: the synthesis of N-acetylglutamate from glutamate and acetyl-CoA as the acetyl donor, and of ornithine by transacetylation between N(2)-acetylornithine and glutamate. In Mycobacterium leprae (strain TN), this protein is Arginine biosynthesis bifunctional protein ArgJ.